Here is a 610-residue protein sequence, read N- to C-terminus: Elongation factor 4 (610 aa).

The tr-type G domain occupies 11 to 193 (EKIRNFSIIA…QIVEKVPAPT (183 aa)). Residues 23-28 (DHGKST) and 140-143 (NKID) each bind GTP.

It belongs to the TRAFAC class translation factor GTPase superfamily. Classic translation factor GTPase family. LepA subfamily.

The protein resides in the cell membrane. It catalyses the reaction GTP + H2O = GDP + phosphate + H(+). Functionally, required for accurate and efficient protein synthesis under certain stress conditions. May act as a fidelity factor of the translation reaction, by catalyzing a one-codon backward translocation of tRNAs on improperly translocated ribosomes. Back-translocation proceeds from a post-translocation (POST) complex to a pre-translocation (PRE) complex, thus giving elongation factor G a second chance to translocate the tRNAs correctly. Binds to ribosomes in a GTP-dependent manner. This Streptococcus pyogenes serotype M3 (strain ATCC BAA-595 / MGAS315) protein is Elongation factor 4.